A 123-amino-acid polypeptide reads, in one-letter code: Signal recognition particle 14 kDa protein (123 aa).

A disordered region spans residues 99–123 (KKKPTPTTTPSSSTTAKTAAKKTKV). The segment covering 103–116 (TPTTTPSSSTTAKT) has biased composition (low complexity).

This sequence belongs to the SRP14 family. Heterodimer with srp9; binds RNA as heterodimer. Component of a signal recognition particle (SRP) complex that consists of a 7SL RNA molecule and six protein subunits: srp72, srp68, srp54, srp19, srp14 and srp9.

Its subcellular location is the cytoplasm. In terms of biological role, component of the signal recognition particle (SRP) complex, a ribonucleoprotein complex that mediates the cotranslational targeting of secretory and membrane proteins to the endoplasmic reticulum (ER). Srp9 together with srp14 and the Alu portion of the SRP RNA, constitutes the elongation arrest domain of SRP. The complex of srp9 and srp14 is required for SRP RNA binding. In Dictyostelium discoideum (Social amoeba), this protein is Signal recognition particle 14 kDa protein (srp14-1).